The chain runs to 189 residues: UPF0301 protein Cgl3084/cg3414 (189 aa).

This sequence belongs to the UPF0301 (AlgH) family.

This is UPF0301 protein Cgl3084/cg3414 from Corynebacterium glutamicum (strain ATCC 13032 / DSM 20300 / JCM 1318 / BCRC 11384 / CCUG 27702 / LMG 3730 / NBRC 12168 / NCIMB 10025 / NRRL B-2784 / 534).